We begin with the raw amino-acid sequence, 899 residues long: MDDVATMKSENANLRKIQSRLLQWEQKDNPLAPLSSAQNEFINRLADSLTGATSPGANPLMESQELSLECKTTLVDFKNSGSVIDSTQDFLSWYNSIDSEILEHYDDVYLDYYGQLKQRSVECDKLLEEIDVSLESLQKLTNEYKFVSEKTSSLHQASENLLQDQTKLNEIGEEIRRRLKYFSQAESIYQRLQNPTFSVSNDTFVEILNTIDECLEYMRVNPGFSEAFAYGVKYRNCLSKATQMMRNYVSNILTNATAQILGPQRSETGMEQGSEAAFALYYGKFQASAPRVKRITGMIEGRLDRSVEYEQLLAALHQQFLANRATIMSSGVEQAIRDLSKKHKGDHCALVRSACAFMVHVCQDEHRLFFQFFTNSSPQLTAYMEGLCTILYDTLRPFIIRIDHLETLAEICSILRVEMLDEHVTYNPESLEAFAKIVYQLLQDVQERIGFRAQNYLESDILNYRPSAGDLAYPEKLEMMESIALSLQENYLRRADSRSSIVSMTSLASQEVESINQQAEQASKSRASNSPADLHGMWYPTVRRTLVCLSRLYRCIDRAIFQSLSQQALAYCIQSVSNAAAQISQKKTSIDGELFEIKHLLILREQIAPFRVDFTVKETSLDFSKVKTAAFELLQKRKQLFALGSNNALLEFLLDGTPQVKEQLLDSRKDVDRQLKMVCEMFIKDATRQLVGPILNFIDTAQNHVKQSAASGSSQPGAKQQQQQGLALRMAAFAAPQQISSIIQESIRNIKTKLGALQRSMQLYLANKDTEFILFRPIRNNIIGSFVKLEQLLTTNSYSKDDLTVVSCPSAEQISVLLSSVNLSGTVGAEPFGGIQRKISASSMGGNGGASVKPPIEKKVSFDSGANTVVQIEAGSEAVEVSAEEASVEEALEGKIEAE.

It belongs to the COG3 family. Component of the conserved oligomeric Golgi complex which is composed of eight different subunits and is required for normal Golgi morphology and localization.

The protein localises to the golgi apparatus membrane. In terms of biological role, involved in ER-Golgi transport. This Aedes aegypti (Yellowfever mosquito) protein is Conserved oligomeric Golgi complex subunit 3.